A 462-amino-acid polypeptide reads, in one-letter code: uncharacterized protein (462 aa).

The region spanning 12-70 is the TRAM domain; that stretch reads MLKKNDIIQVAISDLSHEGAGVAKHDGFVFFVDNALPEEVIDMRVLKVNKNSGFGKVEA. S-adenosyl-L-methionine is bound by residues Gln294, Tyr323, Glu344, and Asp392. Cys419 functions as the Nucleophile in the catalytic mechanism.

Belongs to the class I-like SAM-binding methyltransferase superfamily. RNA M5U methyltransferase family.

This is an uncharacterized protein from Streptococcus pyogenes serotype M18 (strain MGAS8232).